Reading from the N-terminus, the 841-residue chain is mRNA export factor ICP27 homolog (841 aa).

2 disordered regions span residues 12 to 82 (PFAG…QYDK) and 115 to 163 (RAQG…TSPD). A compositionally biased stretch (low complexity) spans 32-49 (YSQQQSQHYYYGHNQSSY). Residues 66-79 (MPPPLSSPSSPPPQ) are compositionally biased toward pro residues. Low complexity predominate over residues 132 to 147 (SSLVSSNNSNNNTTLS). Zn(2+)-binding residues include C298, H411, C413, and C418. The CHC2-type zinc-finger motif lies at 298–418 (CLLDSPGGGG…PGHRCQNEIC (121 aa)). 2 disordered regions span residues 444–749 (HPNG…DDLH) and 774–811 (SVTPLAAPPSIRILDHEPGDAEEEEESDTDFYDETDQP). A compositionally biased stretch (basic and acidic residues) spans 495 to 507 (VDSRGGGGDRRGD). Residues 514–526 (NHHRHHTRRARTR) show a composition bias toward basic residues. The span at 553–563 (RRGEAQRESNG) shows a compositional bias: basic and acidic residues. Low complexity-rich tracts occupy residues 568–579 (KSPSTVSSTTVH) and 591–603 (SRKSQQSQQQPET). Pro residues predominate over residues 614–623 (MPPPPSPCSP). Positions 641–657 (RPHDPPSGEPADAEKEL) are enriched in basic and acidic residues. The segment covering 688 to 699 (DSSSSSSDSSSS) has biased composition (low complexity). The span at 708–731 (EDCRELDLQSKRLEEALEERCERD) shows a compositional bias: basic and acidic residues. 2 stretches are compositionally biased toward acidic residues: residues 732–749 (FEADDEEFAEPIEEDDLH) and 793–809 (DAEEEEESDTDFYDETD).

The protein belongs to the HHV-1 ICP27 protein family.

The protein resides in the virion tegument. It localises to the virion. Its subcellular location is the host nucleus. It is found in the host cytoplasm. Its function is as follows. Immediate early (EI) protein that plays many roles during productive infection including regulation of viral gene expression and nuclear export of intronless viral RNAs. In Mus musculus (Mouse), this protein is mRNA export factor ICP27 homolog.